A 429-amino-acid polypeptide reads, in one-letter code: Adenylosuccinate synthetase (429 aa).

GTP contacts are provided by residues 13 to 19 (GDEGKGK) and 41 to 43 (GHT). Aspartate 14 serves as the catalytic Proton acceptor. Residues aspartate 14 and glycine 41 each contribute to the Mg(2+) site. Residues 14–17 (DEGK), 39–42 (NAGH), threonine 130, arginine 144, glutamine 224, threonine 239, and arginine 303 each bind IMP. Histidine 42 acts as the Proton donor in catalysis. 299-305 (ATTGRAR) provides a ligand contact to substrate. Residues arginine 305, 331-333 (KLD), and 412-414 (STG) contribute to the GTP site.

It belongs to the adenylosuccinate synthetase family. In terms of assembly, homodimer. Mg(2+) is required as a cofactor.

The protein localises to the cytoplasm. It catalyses the reaction IMP + L-aspartate + GTP = N(6)-(1,2-dicarboxyethyl)-AMP + GDP + phosphate + 2 H(+). The protein operates within purine metabolism; AMP biosynthesis via de novo pathway; AMP from IMP: step 1/2. Its function is as follows. Plays an important role in the de novo pathway of purine nucleotide biosynthesis. Catalyzes the first committed step in the biosynthesis of AMP from IMP. This Psychrobacter sp. (strain PRwf-1) protein is Adenylosuccinate synthetase.